A 424-amino-acid chain; its full sequence is UPF0597 protein Sputw3181_2955 (424 aa).

It belongs to the UPF0597 family.

The polypeptide is UPF0597 protein Sputw3181_2955 (Shewanella sp. (strain W3-18-1)).